Reading from the N-terminus, the 422-residue chain is UDP-N-acetylglucosamine 1-carboxyvinyltransferase (422 aa).

Residue 22–23 (KN) participates in phosphoenolpyruvate binding. Arginine 93 contributes to the UDP-N-acetyl-alpha-D-glucosamine binding site. Cysteine 117 acts as the Proton donor in catalysis. Cysteine 117 carries the post-translational modification 2-(S-cysteinyl)pyruvic acid O-phosphothioketal. Residues 122–126 (RPVDQ), aspartate 305, and isoleucine 327 each bind UDP-N-acetyl-alpha-D-glucosamine.

Belongs to the EPSP synthase family. MurA subfamily.

The protein localises to the cytoplasm. The catalysed reaction is phosphoenolpyruvate + UDP-N-acetyl-alpha-D-glucosamine = UDP-N-acetyl-3-O-(1-carboxyvinyl)-alpha-D-glucosamine + phosphate. The protein operates within cell wall biogenesis; peptidoglycan biosynthesis. In terms of biological role, cell wall formation. Adds enolpyruvyl to UDP-N-acetylglucosamine. This is UDP-N-acetylglucosamine 1-carboxyvinyltransferase from Bordetella bronchiseptica (strain ATCC BAA-588 / NCTC 13252 / RB50) (Alcaligenes bronchisepticus).